The following is a 114-amino-acid chain: uncharacterized protein (114 aa).

The disordered stretch occupies residues 1 to 37 (MLKKILSLFKKEEPKTEEKPTEVEEKKEEREEKEEKK). Positions 9–37 (FKKEEPKTEEKPTEVEEKKEEREEKEEKK) are enriched in basic and acidic residues.

This is an uncharacterized protein from Aquifex aeolicus (strain VF5).